Consider the following 311-residue polypeptide: Porphobilinogen deaminase (311 aa).

Cysteine 245 is modified (S-(dipyrrolylmethanemethyl)cysteine).

This sequence belongs to the HMBS family. In terms of assembly, monomer. It depends on dipyrromethane as a cofactor.

It catalyses the reaction 4 porphobilinogen + H2O = hydroxymethylbilane + 4 NH4(+). It participates in porphyrin-containing compound metabolism; protoporphyrin-IX biosynthesis; coproporphyrinogen-III from 5-aminolevulinate: step 2/4. Its function is as follows. Tetrapolymerization of the monopyrrole PBG into the hydroxymethylbilane pre-uroporphyrinogen in several discrete steps. The sequence is that of Porphobilinogen deaminase from Deinococcus deserti (strain DSM 17065 / CIP 109153 / LMG 22923 / VCD115).